An 89-amino-acid chain; its full sequence is Small ribosomal subunit protein uS15 (89 aa).

It belongs to the universal ribosomal protein uS15 family. Part of the 30S ribosomal subunit. Forms a bridge to the 50S subunit in the 70S ribosome, contacting the 23S rRNA.

In terms of biological role, one of the primary rRNA binding proteins, it binds directly to 16S rRNA where it helps nucleate assembly of the platform of the 30S subunit by binding and bridging several RNA helices of the 16S rRNA. Forms an intersubunit bridge (bridge B4) with the 23S rRNA of the 50S subunit in the ribosome. In Beijerinckia indica subsp. indica (strain ATCC 9039 / DSM 1715 / NCIMB 8712), this protein is Small ribosomal subunit protein uS15.